Consider the following 401-residue polypeptide: Nicotinate phosphoribosyltransferase (401 aa).

At His-221 the chain carries Phosphohistidine; by autocatalysis.

The protein belongs to the NAPRTase family. Post-translationally, transiently phosphorylated on a His residue during the reaction cycle. Phosphorylation strongly increases the affinity for substrates and increases the rate of nicotinate D-ribonucleotide production. Dephosphorylation regenerates the low-affinity form of the enzyme, leading to product release.

It catalyses the reaction nicotinate + 5-phospho-alpha-D-ribose 1-diphosphate + ATP + H2O = nicotinate beta-D-ribonucleotide + ADP + phosphate + diphosphate. It functions in the pathway cofactor biosynthesis; NAD(+) biosynthesis; nicotinate D-ribonucleotide from nicotinate: step 1/1. Catalyzes the synthesis of beta-nicotinate D-ribonucleotide from nicotinate and 5-phospho-D-ribose 1-phosphate at the expense of ATP. In Pectobacterium carotovorum subsp. carotovorum (strain PC1), this protein is Nicotinate phosphoribosyltransferase.